A 231-amino-acid chain; its full sequence is Glycerol-3-phosphate acyltransferase (231 aa).

6 helical membrane passes run Phe6 to Gly26, Trp55 to Leu75, Leu95 to Phe115, Ile130 to Leu150, Leu152 to Trp172, and Leu196 to Ile216.

It belongs to the PlsY family. Probably interacts with PlsX.

It is found in the cell membrane. It carries out the reaction an acyl phosphate + sn-glycerol 3-phosphate = a 1-acyl-sn-glycero-3-phosphate + phosphate. It participates in lipid metabolism; phospholipid metabolism. In terms of biological role, catalyzes the transfer of an acyl group from acyl-phosphate (acyl-PO(4)) to glycerol-3-phosphate (G3P) to form lysophosphatidic acid (LPA). This enzyme utilizes acyl-phosphate as fatty acyl donor, but not acyl-CoA or acyl-ACP. The chain is Glycerol-3-phosphate acyltransferase from Aster yellows witches'-broom phytoplasma (strain AYWB).